We begin with the raw amino-acid sequence, 157 residues long: MRIIGIDPGLGRVGYGIIEIQNEKKIFLDCGVIETNKNKGEGDRLYEIFNDLNTLIDQWKPDIAAVEKFFFYRSSTTISVVQARGVIMMVFAFKSIKVSEYAPSQVKLTIAGSGKASKKEVIEAVMYNLNLTRAPKPDDSADALAIALTKLNEEGFN.

Catalysis depends on residues Asp7, Glu67, and Asp139. Mg(2+) contacts are provided by Asp7, Glu67, and Asp139.

Belongs to the RuvC family. In terms of assembly, homodimer which binds Holliday junction (HJ) DNA. The HJ becomes 2-fold symmetrical on binding to RuvC with unstacked arms; it has a different conformation from HJ DNA in complex with RuvA. In the full resolvosome a probable DNA-RuvA(4)-RuvB(12)-RuvC(2) complex forms which resolves the HJ. The cofactor is Mg(2+).

It is found in the cytoplasm. It catalyses the reaction Endonucleolytic cleavage at a junction such as a reciprocal single-stranded crossover between two homologous DNA duplexes (Holliday junction).. Functionally, the RuvA-RuvB-RuvC complex processes Holliday junction (HJ) DNA during genetic recombination and DNA repair. Endonuclease that resolves HJ intermediates. Cleaves cruciform DNA by making single-stranded nicks across the HJ at symmetrical positions within the homologous arms, yielding a 5'-phosphate and a 3'-hydroxyl group; requires a central core of homology in the junction. The consensus cleavage sequence is 5'-(A/T)TT(C/G)-3'. Cleavage occurs on the 3'-side of the TT dinucleotide at the point of strand exchange. HJ branch migration catalyzed by RuvA-RuvB allows RuvC to scan DNA until it finds its consensus sequence, where it cleaves and resolves the cruciform DNA. This is Crossover junction endodeoxyribonuclease RuvC from Prochlorococcus marinus subsp. pastoris (strain CCMP1986 / NIES-2087 / MED4).